Consider the following 535-residue polypeptide: T-complex protein 1 subunit beta (535 aa).

Residue Met-1 is modified to N-acetylmethionine. Ala-2 is subject to N-acetylalanine. Ser-3 is modified (phosphoserine). Position 13 is an N6-acetyllysine (Lys-13). ADP is bound at residue Gly-44. Position 44 (Gly-44) interacts with ATP. Ser-60 carries the post-translational modification Phosphoserine. Mg(2+) is bound at residue Asp-97. Residues Gly-98, Thr-99, Thr-100, and Ser-101 each contribute to the ADP site. Residues Gly-98, Thr-99, and Thr-100 each coordinate ATP. An N6-acetyllysine modification is found at Lys-154. Ser-168 and Ser-169 together coordinate ADP. Lys-181 bears the N6-acetyllysine mark. A Glycyl lysine isopeptide (Lys-Gly) (interchain with G-Cter in SUMO2) cross-link involves residue Lys-248. At Ser-260 the chain carries Phosphoserine. At Thr-261 the chain carries Phosphothreonine. ADP is bound by residues Gly-410, Glu-495, and Lys-500. ATP-binding residues include Glu-495 and Lys-500.

This sequence belongs to the TCP-1 chaperonin family. In terms of assembly, component of the chaperonin-containing T-complex (TRiC), a hexadecamer composed of two identical back-to-back stacked rings enclosing a protein folding chamber. Each ring is made up of eight different subunits: TCP1/CCT1, CCT2, CCT3, CCT4, CCT5, CCT6A/CCT6, CCT7, CCT8. Interacts with PACRG. Interacts with FLCN. Interacts with DLEC1. Interacts with SVEP1.

The protein localises to the cytoplasm. The enzyme catalyses ATP + H2O = ADP + phosphate + H(+). Its function is as follows. Component of the chaperonin-containing T-complex (TRiC), a molecular chaperone complex that assists the folding of actin, tubulin and other proteins upon ATP hydrolysis. The TRiC complex mediates the folding of WRAP53/TCAB1, thereby regulating telomere maintenance. As part of the TRiC complex may play a role in the assembly of BBSome, a complex involved in ciliogenesis regulating transports vesicles to the cilia. The polypeptide is T-complex protein 1 subunit beta (Homo sapiens (Human)).